A 451-amino-acid chain; its full sequence is uncharacterized protein (451 aa).

An N-terminal signal peptide occupies residues 1–18 (MRTRITLALAVLLLLLAG). Cys-19 carries N-palmitoyl cysteine lipidation. Cys-19 is lipidated: S-diacylglycerol cysteine. The interval 424-451 (TSADPPPGVPRAGKRNIRDATSRLPSTP) is disordered.

The protein resides in the cell membrane. In terms of biological role, may participate in oleandomycin glycosylation and secretion during antibiotic production. This is an uncharacterized protein from Streptomyces antibioticus.